A 178-amino-acid chain; its full sequence is Photosystem I assembly protein Ycf4 (178 aa).

The next 2 membrane-spanning stretches (helical) occupy residues 19–39 (ILVA…SLSS) and 61–81 (LIMG…WAVI).

The protein belongs to the Ycf4 family.

The protein localises to the cellular thylakoid membrane. Seems to be required for the assembly of the photosystem I complex. The sequence is that of Photosystem I assembly protein Ycf4 from Synechococcus sp. (strain CC9311).